Consider the following 363-residue polypeptide: 3-isopropylmalate dehydrogenase (363 aa).

79-92 (GPKWEHLPPNDQPE) is an NAD(+) binding site. Arg100, Arg110, Arg139, and Asp228 together coordinate substrate. Asp228, Asp252, and Asp256 together coordinate Mg(2+). 286 to 298 (GSAPDIAGKNIAN) provides a ligand contact to NAD(+).

This sequence belongs to the isocitrate and isopropylmalate dehydrogenases family. LeuB type 1 subfamily. In terms of assembly, homodimer. Requires Mg(2+) as cofactor. The cofactor is Mn(2+).

Its subcellular location is the cytoplasm. It catalyses the reaction (2R,3S)-3-isopropylmalate + NAD(+) = 4-methyl-2-oxopentanoate + CO2 + NADH. The protein operates within amino-acid biosynthesis; L-leucine biosynthesis; L-leucine from 3-methyl-2-oxobutanoate: step 3/4. Catalyzes the oxidation of 3-carboxy-2-hydroxy-4-methylpentanoate (3-isopropylmalate) to 3-carboxy-4-methyl-2-oxopentanoate. The product decarboxylates to 4-methyl-2 oxopentanoate. The polypeptide is 3-isopropylmalate dehydrogenase (Vibrio vulnificus (strain CMCP6)).